Here is a 154-residue protein sequence, read N- to C-terminus: Small ribosomal subunit protein uS13m (154 aa).

The N-terminal 30 residues, 1-30, are a transit peptide targeting the mitochondrion; that stretch reads MLGLRRSATTLFDISQSLLRNVTFHGLRVQ. Residues 121–154 form a disordered region; sequence RHGLPCRGQRTSTNARTKKGKAVAIAGKKKAPRK. The segment covering 136–154 has biased composition (basic residues); that stretch reads RTKKGKAVAIAGKKKAPRK.

It belongs to the universal ribosomal protein uS13 family. In terms of assembly, part of the small ribosomal subunit.

It is found in the mitochondrion. In terms of biological role, located at the top of the head of the small subunit, it contacts several helices of the 18S rRNA. This chain is Small ribosomal subunit protein uS13m (RPS13), found in Arabidopsis thaliana (Mouse-ear cress).